Consider the following 115-residue polypeptide: Large ribosomal subunit protein bL20 (115 aa).

It belongs to the bacterial ribosomal protein bL20 family.

Binds directly to 23S ribosomal RNA and is necessary for the in vitro assembly process of the 50S ribosomal subunit. It is not involved in the protein synthesizing functions of that subunit. This chain is Large ribosomal subunit protein bL20, found in Prochlorococcus marinus (strain MIT 9303).